The following is a 378-amino-acid chain: Circumsporozoite protein (378 aa).

A signal peptide spans 1–22 (MKNFILLAVSSILLVDLFPTHC). The tract at residues 51–295 (HVGQSASRGR…NNEGANAPNE (245 aa)) is disordered. Over residues 72-100 (DAKKKKDGKKAEPKNPRENKLKQPGDRAD) the composition is skewed to basic and acidic residues. A required for the binding to heparan sulfate proteoglycans (HSPGs) on the surface of host hepatocytes region spans residues 80–88 (KKAEPKNPR). Positions 91–95 (KLKQP) are region I; contains the proteolytic cleavage site. Tandem repeats lie at residues 95–103 (PGDRADGQP), 104–112 (AGDRADGQP), 113–121 (AGDRADGQP), 122–130 (AGDRAAGQP), 131–139 (AGDRADGQP), 140–148 (AGDRADGQP), 149–157 (AGDRADGQP), 158–166 (AGDRADGQP), 167–175 (AGDRAAGQP), 176–184 (AGDRAAGQP), 185–193 (AGDRADGQP), 194–202 (AGDRAAGQP), 203–211 (AGDRADGQP), 212–220 (AGDRAAGQP), 221–229 (AGDRADGQP), 230–238 (AGDRAAGQP), 239–247 (AGDRAAGQP), 248–256 (AGDRAAGQP), and 257–265 (AGDRAAGQP). Residues 95 to 265 (PGDRADGQPA…PAGDRAAGQP (171 aa)) are 19 X 9 AA tandem repeats of [PA]-G-D-R-A-[DA]-G-Q-P. Over residues 266 to 284 (AGNGAGGQAAGGNAGGGQG) the composition is skewed to gly residues. The segment covering 285 to 295 (QNNEGANAPNE) has biased composition (low complexity). A TSP type-1 domain is found at 304-356 (KVRATVGTEWTPCSVTCGVGVRVRRRVNAANKKPEDLTLNDLETDVCTMDKCA). Intrachain disulfides connect Cys316–Cys350 and Cys320–Cys355. O-linked (Fuc) threonine glycosylation is present at Thr319. The GPI-anchor amidated cysteine moiety is linked to residue Cys355. A propeptide spans 356–378 (AGIFNVVSNSLGLVILLVLALFN) (removed in mature form).

This sequence belongs to the plasmodium circumsporozoite protein family. In terms of processing, during host cell invasion, proteolytically cleaved at the cell membrane in the region I by a papain-like cysteine protease of parasite origin. Cleavage is triggered by the sporozoite contact with highly sulfated heparan sulfate proteoglycans (HSPGs) present on the host hepatocyte cell surface. Cleavage exposes the TSP type-1 (TSR) domain and is required for productive invasion of host hepatocytes but not for adhesion to the host cell membrane. Cleavage is dispensable for sporozoite development in the oocyst, motility and for traversal of host and vector cells. O-glycosylated; maybe by POFUT2.

The protein resides in the cell membrane. Its subcellular location is the cytoplasm. Functionally, essential sporozoite protein. In the mosquito vector, required for sporozoite development in the oocyst, migration through the vector hemolymph and entry into the vector salivary glands. In the vertebrate host, required for sporozoite migration through the host dermis and infection of host hepatocytes. Binds to highly sulfated heparan sulfate proteoglycans (HSPGs) on the surface of host hepatocytes. In terms of biological role, in the vertebrate host, binds to highly sulfated heparan sulfate proteoglycans (HSPGs) on the surface of host hepatocytes and is required for sporozoite invasion of the host hepatocytes. The chain is Circumsporozoite protein from Plasmodium vivax (strain Belem).